A 2149-amino-acid polypeptide reads, in one-letter code: Polyketide synthase 1 (2149 aa).

Residues 19–261 (FIFGDQSSCN…TRLAVHAPYH (243 aa)) form an N-terminal acylcarrier protein transacylase domain (SAT) region. One can recognise a Ketosynthase family 3 (KS3) domain in the interval 394–829 (ESKIAIIGMS…GGNTALLVED (436 aa)). Catalysis depends on for beta-ketoacyl synthase activity residues Cys-566, His-701, and His-745. The malonyl-CoA:ACP transacylase (MAT) domain stretch occupies residues 929 to 1233 (AFVFSGQGSQ…PSLMRNKDGW (305 aa)). The active-site For acyl/malonyl transferase activity is Ser-1018. The interval 1310-1624 (TASVHRIVHE…RKVLNTAMPP (315 aa)) is product template (PT) domain. The segment at 1314–1447 (HRIVHESVDK…SSLHFERPKV (134 aa)) is N-terminal hotdog fold. The PKS/mFAS DH domain maps to 1314 to 1619 (HRIVHESVDK…FQGIPRKVLN (306 aa)). The active-site Proton acceptor; for dehydratase activity is His-1346. Residues 1474–1619 (LNSRMSSGVI…FQGIPRKVLN (146 aa)) form a C-terminal hotdog fold region. Asp-1533 serves as the catalytic Proton donor; for dehydratase activity. Residues 1619–1657 (NTAMPPPKSQNEAPVRSAPAKPAAKPPKSASSEHSGHFA) are disordered. Residues 1635–1650 (SAPAKPAAKPPKSASS) show a composition bias toward low complexity. The region spanning 1678–1752 (RNPMLAVFKI…DLATHLGLDT (75 aa)) is the Carrier 1 domain. At Ser-1712 the chain carries O-(pantetheine 4'-phosphoryl)serine. The segment covering 1755–1790 (SDQSSGQSSSSGGLSPRSDSIGEITSSATTPPSLSP) has biased composition (low complexity). The tract at residues 1755–1796 (SDQSSGQSSSSGGLSPRSDSIGEITSSATTPPSLSPRGSVSG) is disordered. The Carrier 2 domain maps to 1793 to 1870 (SVSGSQCKDV…SFKHMFQQGH (78 aa)). Residue Ser-1830 is modified to O-(pantetheine 4'-phosphoryl)serine. The tract at residues 1882–2147 (LKQYRATSTL…ERVAAFIRST (266 aa)) is thioesterase (TE) domain. Ser-1973 functions as the For thioesterase activity in the catalytic mechanism.

Functionally, polyketide synthase; part of the Pks1 gene cluster that mediates the biosynthesis of an anthraquinone derivative pigment that contributes to conidial pigmentation that provides protection from UV radiation, heat and cold stress. The polyketide synthase Pks1 produces 1-acetyl-2,4,6,8-tetrahydroxy-9,10-anthraquinone though condensation of acetyl-CoA with malonyl-CoA. The dehydratase EthD and the laccase Mlac1 further convert the anthraquinone derivative into the final conidial pigment. The polypeptide is Polyketide synthase 1 (Metarhizium majus (strain ARSEF 297)).